Reading from the N-terminus, the 300-residue chain is Large ribosomal subunit protein uL18 (300 aa).

Residues 246 to 267 (NIRSDPKRDRKPKKDVSKEPKR) are compositionally biased toward basic and acidic residues. A disordered region spans residues 246–276 (NIRSDPKRDRKPKKDVSKEPKRWNAKKLTNA).

It belongs to the universal ribosomal protein uL18 family. Component of the large ribosomal subunit (LSU).

Its subcellular location is the cytoplasm. The protein resides in the nucleus. Component of the ribosome, a large ribonucleoprotein complex responsible for the synthesis of proteins in the cell. The small ribosomal subunit (SSU) binds messenger RNAs (mRNAs) and translates the encoded message by selecting cognate aminoacyl-transfer RNA (tRNA) molecules. The large subunit (LSU) contains the ribosomal catalytic site termed the peptidyl transferase center (PTC), which catalyzes the formation of peptide bonds, thereby polymerizing the amino acids delivered by tRNAs into a polypeptide chain. The nascent polypeptides leave the ribosome through a tunnel in the LSU and interact with protein factors that function in enzymatic processing, targeting, and the membrane insertion of nascent chains at the exit of the ribosomal tunnel. The polypeptide is Large ribosomal subunit protein uL18 (RpL5) (Toxoptera citricida (Brown citrus aphid)).